The following is a 213-amino-acid chain: Achelase-1 (213 aa).

The region spanning 1-213 is the Peptidase S1 domain; that stretch reads IVGGSVTTIG…RYTSWIQSNA (213 aa). Residues Cys26 and Cys42 are joined by a disulfide bond. Catalysis depends on charge relay system residues His41 and Asp86. Cys155 and Cys172 are joined by a disulfide. Catalysis depends on Ser188, which acts as the Charge relay system.

It belongs to the peptidase S1 family. As to expression, hemolymph and saliva of the larval form (caterpillar).

It is found in the secreted. It localises to the extracellular space. Its activity is regulated as follows. Sensitive to serine proteinase inhibitors and thiol proteinase inhibitors. Its function is as follows. Fibrinolytic activity; shows preferential cleavage of Arg-Gly bonds in all three fibrinogen chains. Contact with the caterpillars causes severe bleeding, due the anticoagulant effect of the protein. The polypeptide is Achelase-1 (Lonomia achelous (Giant silkworm moth)).